The sequence spans 277 residues: Large ribosomal subunit protein uL2 (277 aa).

Residues 219 to 277 (RPQTRGSAMNPVDHPHGGGEGKKNSGRHPVTPWGKPTKGAKTRRKKASDKLIISRRKGK) are disordered. Residues 231-241 (DHPHGGGEGKK) show a composition bias toward basic and acidic residues. The span at 256 to 277 (KGAKTRRKKASDKLIISRRKGK) shows a compositional bias: basic residues.

The protein belongs to the universal ribosomal protein uL2 family. As to quaternary structure, part of the 50S ribosomal subunit. Forms a bridge to the 30S subunit in the 70S ribosome.

In terms of biological role, one of the primary rRNA binding proteins. Required for association of the 30S and 50S subunits to form the 70S ribosome, for tRNA binding and peptide bond formation. It has been suggested to have peptidyltransferase activity; this is somewhat controversial. Makes several contacts with the 16S rRNA in the 70S ribosome. The chain is Large ribosomal subunit protein uL2 from Campylobacter concisus (strain 13826).